The following is a 312-amino-acid chain: tRNA dimethylallyltransferase (312 aa).

An ATP-binding site is contributed by 15–22 (GPTAAGKS). Position 17-22 (17-22 (TAAGKS)) interacts with substrate. The tract at residues 40–43 (DSMQ) is interaction with substrate tRNA.

Belongs to the IPP transferase family. Monomer. Requires Mg(2+) as cofactor.

The enzyme catalyses adenosine(37) in tRNA + dimethylallyl diphosphate = N(6)-dimethylallyladenosine(37) in tRNA + diphosphate. Its function is as follows. Catalyzes the transfer of a dimethylallyl group onto the adenine at position 37 in tRNAs that read codons beginning with uridine, leading to the formation of N6-(dimethylallyl)adenosine (i(6)A). This chain is tRNA dimethylallyltransferase, found in Streptomyces griseus subsp. griseus (strain JCM 4626 / CBS 651.72 / NBRC 13350 / KCC S-0626 / ISP 5235).